A 70-amino-acid chain; its full sequence is ATP synthase subunit c (70 aa).

Helical transmembrane passes span 4-24 (IAAAIAIGLGALGAGIGNGLI) and 45-65 (LMFIGVALVEALPIIAVVIAF).

This sequence belongs to the ATPase C chain family. As to quaternary structure, F-type ATPases have 2 components, F(1) - the catalytic core - and F(0) - the membrane proton channel. F(1) has five subunits: alpha(3), beta(3), gamma(1), delta(1), epsilon(1). F(0) has three main subunits: a(1), b(2) and c(10-14). The alpha and beta chains form an alternating ring which encloses part of the gamma chain. F(1) is attached to F(0) by a central stalk formed by the gamma and epsilon chains, while a peripheral stalk is formed by the delta and b chains.

Its subcellular location is the cell membrane. F(1)F(0) ATP synthase produces ATP from ADP in the presence of a proton or sodium gradient. F-type ATPases consist of two structural domains, F(1) containing the extramembraneous catalytic core and F(0) containing the membrane proton channel, linked together by a central stalk and a peripheral stalk. During catalysis, ATP synthesis in the catalytic domain of F(1) is coupled via a rotary mechanism of the central stalk subunits to proton translocation. In Bacillus pumilus (strain SAFR-032), this protein is ATP synthase subunit c.